The following is a 252-amino-acid chain: Pantothenate synthetase (252 aa).

29 to 36 (MGNLHAGH) provides a ligand contact to ATP. H36 acts as the Proton donor in catalysis. Q60 is a (R)-pantoate binding site. Q60 provides a ligand contact to beta-alanine. 146–149 (GEKD) is a binding site for ATP. Q152 contributes to the (R)-pantoate binding site. ATP contacts are provided by residues V175 and 183-186 (CSSR).

The protein belongs to the pantothenate synthetase family. Homodimer.

It is found in the cytoplasm. It catalyses the reaction (R)-pantoate + beta-alanine + ATP = (R)-pantothenate + AMP + diphosphate + H(+). The protein operates within cofactor biosynthesis; (R)-pantothenate biosynthesis; (R)-pantothenate from (R)-pantoate and beta-alanine: step 1/1. In terms of biological role, catalyzes the condensation of pantoate with beta-alanine in an ATP-dependent reaction via a pantoyl-adenylate intermediate. The sequence is that of Pantothenate synthetase from Legionella pneumophila subsp. pneumophila (strain Philadelphia 1 / ATCC 33152 / DSM 7513).